We begin with the raw amino-acid sequence, 467 residues long: Cytochrome c-552 (467 aa).

Residues 1 to 27 (MMKKMTGKSFALSALVAASFMAAGAMA) form the signal peptide. Heme c is bound at residue histidine 87. Heme-binding residues include cysteine 115, cysteine 118, and lysine 119. Cysteine 153, cysteine 156, histidine 157, cysteine 195, cysteine 198, and histidine 199 together coordinate heme c. Ca(2+) contacts are provided by glutamate 201, tyrosine 202, lysine 250, and glutamine 252. Tyrosine 202 contacts substrate. Residue histidine 253 coordinates substrate. Residues histidine 264, cysteine 271, cysteine 274, histidine 275, histidine 290, cysteine 303, cysteine 306, histidine 307, and histidine 382 each contribute to the heme c site.

Belongs to the cytochrome c-552 family. It depends on Ca(2+) as a cofactor. Heme c is required as a cofactor.

The protein resides in the periplasm. It carries out the reaction 6 Fe(III)-[cytochrome c] + NH4(+) + 2 H2O = 6 Fe(II)-[cytochrome c] + nitrite + 8 H(+). Its pathway is nitrogen metabolism; nitrate reduction (assimilation). Its function is as follows. Catalyzes the reduction of nitrite to ammonia, consuming six electrons in the process. The sequence is that of Cytochrome c-552 from Shewanella sp. (strain W3-18-1).